Consider the following 464-residue polypeptide: MLKIFNTLTSTKEIFTPIKKNRVNLYVCGVTVYDFCHIGHGRTFVVFDMIVRYLRFSGFQVKYVRNITDIDDKIISKSTKEKKKINTFTASMIKEMHKDFDLLGISVPDEEPRVTDYIDNIIRIITTLIKKKHAYIHKNGDVIFSIDSDPNYGTLSRQSLTSLESGSRIPLNNMKKNPLDFILWKSSNKEEYSWDSPWGKGRPGWHIECSAITNVFFNNSIDIHGGGSDLLFPHHENERSQSICFNNKSMINFWMHTGMVILNNKKMSKSLGNVYFLRNILKDCDAEVLRYFFLSTHYRHPIYYCEKNLDQAYTSLKYLYTALYDTNPFFNNEEGLNFELEFYNAMNDDFNTPAVFSIFFKIARKINFLKNKDILKTNKFAFRLKYLANNLGFLFQDPKEFLQKKTTLNLLTLKEIQLLIEKRNIARQSKLWQEADNIRKKLMSLDIILEDLPDKTIWRKNKKS.

Position 28 (Cys28) interacts with Zn(2+). The 'HIGH' region signature appears at 30–40; it reads VTVYDFCHIGH. Residues Cys209, His234, and Glu238 each contribute to the Zn(2+) site. The 'KMSKS' region motif lies at 266 to 270; sequence KMSKS. Residue Lys269 participates in ATP binding.

It belongs to the class-I aminoacyl-tRNA synthetase family. In terms of assembly, monomer. Zn(2+) serves as cofactor.

It localises to the cytoplasm. It carries out the reaction tRNA(Cys) + L-cysteine + ATP = L-cysteinyl-tRNA(Cys) + AMP + diphosphate. This chain is Cysteine--tRNA ligase (cysS), found in Buchnera aphidicola subsp. Acyrthosiphon pisum (strain APS) (Acyrthosiphon pisum symbiotic bacterium).